The primary structure comprises 316 residues: Phospholipase A1 3 (316 aa).

Positions alanine 1 to leucine 4 are cleaved as a signal peptide. A propeptide spanning residues threonine 5–arginine 14 is cleaved from the precursor. Cysteine 20 and cysteine 103 form a disulfide bridge. The Nucleophile role is filled by serine 153. The Charge relay system role is filled by aspartate 181. Disulfide bonds link cysteine 192/cysteine 197 and cysteine 235/cysteine 240. The active-site Charge relay system is histidine 242. 3 disulfide bridges follow: cysteine 257-cysteine 284, cysteine 258-cysteine 309, and cysteine 277-cysteine 282.

Belongs to the AB hydrolase superfamily. Lipase family. In terms of tissue distribution, expressed by the venom gland.

The protein localises to the secreted. The enzyme catalyses a 1,2-diacyl-sn-glycero-3-phosphocholine + H2O = a 2-acyl-sn-glycero-3-phosphocholine + a fatty acid + H(+). In terms of biological role, catalyzes the hydrolysis of phosphatidylcholine with phospholipase A1 activity. May act as an allergen and induce hemolytic activity. In Polistes dominula (European paper wasp), this protein is Phospholipase A1 3.